A 36-amino-acid polypeptide reads, in one-letter code: MDTRLLVIAAPVLVAASWALFNIGRLAIQQIQRLSR.

The Lumenal portion of the chain corresponds to 1–4 (MDTR). Residues 5-23 (LLVIAAPVLVAASWALFNI) form a helical membrane-spanning segment. The Stromal portion of the chain corresponds to 24–36 (GRLAIQQIQRLSR).

Belongs to the PsbY family. As to quaternary structure, PSII is composed of 1 copy each of membrane proteins PsbA, PsbB, PsbC, PsbD, PsbE, PsbF, PsbH, PsbI, PsbJ, PsbK, PsbL, PsbM, PsbT, PsbX, PsbY, PsbZ, Psb30/Ycf12, at least 3 peripheral proteins of the oxygen-evolving complex and a large number of cofactors. It forms dimeric complexes.

It is found in the plastid. The protein resides in the chloroplast thylakoid membrane. Its function is as follows. Loosely associated component of the core of photosystem II (PSII), it is not always seen in crystals. PSII is a light-driven water plastoquinone oxidoreductase, using light energy to abstract electrons from H(2)O, generating a proton gradient subsequently used for ATP formation. The protein is Photosystem II reaction center protein Y of Thalassiosira pseudonana (Marine diatom).